A 70-amino-acid chain; its full sequence is MSNKMTGLVKWFNADKGFGFITPDDGSKDVFVHFTAIQSNEFRTLNENQKVEFSIEQGQRGPAAANVVTL.

The 61-residue stretch at 7–67 folds into the CSD domain; the sequence is GLVKWFNADK…GQRGPAAANV (61 aa).

It localises to the cytoplasm. This is Cold shock-like protein CspG (cspG) from Escherichia coli O157:H7.